An 84-amino-acid polypeptide reads, in one-letter code: Anaphase-promoting complex subunit 11 (84 aa).

Zn(2+) contacts are provided by Cys-23, Cys-26, Cys-34, Cys-37, Cys-44, Cys-51, His-53, His-56, His-58, Cys-59, Cys-73, and Cys-76. The segment at 34 to 77 (CPDCKVPGDDCPLVWGQCSHCFHMHCILKWLNAQQVQQHCPMCR) adopts an RING-type zinc-finger fold.

This sequence belongs to the RING-box family. In terms of assembly, the mammalian APC/C is composed at least of 14 distinct subunits ANAPC1, ANAPC2, CDC27/APC3, ANAPC4, ANAPC5, CDC16/APC6, ANAPC7, CDC23/APC8, ANAPC10, ANAPC11, CDC26/APC12, ANAPC13, ANAPC15 and ANAPC16 that assemble into a complex of at least 19 chains with a combined molecular mass of around 1.2 MDa; APC/C interacts with FZR1 and FBXO5. Interacts with the cullin domain of ANAPC2. Interacts with UBE2D2. In terms of processing, auto-ubiquitinated.

It localises to the cytoplasm. The protein localises to the nucleus. It participates in protein modification; protein ubiquitination. In terms of biological role, together with the cullin protein ANAPC2, constitutes the catalytic component of the anaphase promoting complex/cyclosome (APC/C), a cell cycle-regulated E3 ubiquitin ligase that controls progression through mitosis and the G1 phase of the cell cycle. The APC/C complex acts by mediating ubiquitination and subsequent degradation of target proteins: it mainly mediates the formation of 'Lys-11'-linked polyubiquitin chains and, to a lower extent, the formation of 'Lys-48'- and 'Lys-63'-linked polyubiquitin chains. The APC/C complex catalyzes assembly of branched 'Lys-11'-/'Lys-48'-linked branched ubiquitin chains on target proteins. May recruit the E2 ubiquitin-conjugating enzymes to the complex. This Bos taurus (Bovine) protein is Anaphase-promoting complex subunit 11 (ANAPC11).